The chain runs to 263 residues: Superoxide dismutase [Fe] 3, chloroplastic (263 aa).

Residues 1 to 41 (MSSCVVTTSCFYTISDSSIRLKSPKLLNLSNQQRRRSLRSR) constitute a chloroplast transit peptide. Residues histidine 74, histidine 127, aspartate 211, and histidine 215 each coordinate Fe cation.

It belongs to the iron/manganese superoxide dismutase family. As to quaternary structure, homodimer. Heterodimer with FSD2. Interacts with MRL7. Fe cation serves as cofactor.

It localises to the plastid. The protein resides in the chloroplast thylakoid. The enzyme catalyses 2 superoxide + 2 H(+) = H2O2 + O2. With respect to regulation, activated by cpn20/cpn21 (in vitro). Destroys superoxide anion radicals which are normally produced within the cells and which are toxic to biological systems. Plays important role in chloroplast development, particularly in the maintenance of thylakoids membranes. Seems to act as a heterodimer with FSD2. In Arabidopsis thaliana (Mouse-ear cress), this protein is Superoxide dismutase [Fe] 3, chloroplastic.